The sequence spans 73 residues: U-scoloptoxin(15)-Sm3a (73 aa).

A signal peptide spans 1–23 (MERKVFLLLFVIVLLTLPGFMSA).

The protein belongs to the scoloptoxin-15 family. In terms of processing, contains 2 disulfide bonds. As to expression, expressed by the venom gland.

It localises to the secreted. The protein is U-scoloptoxin(15)-Sm3a of Scolopendra morsitans (Tanzanian blue ringleg centipede).